The chain runs to 358 residues: HTH-type transcriptional regulator IpsA (358 aa).

In terms of domain architecture, HTH lacI-type spans 8-63 (GTLASIAAKLGISRTTVSNAYNRPEQLSAELRQRILDTAEDMGYLGPDPVARSLRT). A DNA-binding region (H-T-H motif) is located at residues 10–29 (LASIAAKLGISRTTVSNAYN).

In terms of assembly, homodimer.

Its activity is regulated as follows. Myo-inositol causes the dissociation of the IpsA-DNA complex in vitro. Its function is as follows. Plays a role in the regulation of cell wall biogenesis. Inositol-dependent transcriptional activator of ino1, which encodes inositol phosphate synthase. Also regulates other target genes, which are most likely involved in the synthesis of inositol-derived cell wall components and mycothiol. Acts by binding to a conserved palindromic motif within the promoter regions. The protein is HTH-type transcriptional regulator IpsA of Corynebacterium glutamicum (strain ATCC 13032 / DSM 20300 / JCM 1318 / BCRC 11384 / CCUG 27702 / LMG 3730 / NBRC 12168 / NCIMB 10025 / NRRL B-2784 / 534).